A 118-amino-acid polypeptide reads, in one-letter code: Large ribosomal subunit protein bL20 (118 aa).

This sequence belongs to the bacterial ribosomal protein bL20 family.

Functionally, binds directly to 23S ribosomal RNA and is necessary for the in vitro assembly process of the 50S ribosomal subunit. It is not involved in the protein synthesizing functions of that subunit. The protein is Large ribosomal subunit protein bL20 of Shigella flexneri serotype 5b (strain 8401).